Here is a 283-residue protein sequence, read N- to C-terminus: ATP phosphoribosyltransferase (283 aa).

This sequence belongs to the ATP phosphoribosyltransferase family. Long subfamily. Mg(2+) is required as a cofactor.

It localises to the cytoplasm. The enzyme catalyses 1-(5-phospho-beta-D-ribosyl)-ATP + diphosphate = 5-phospho-alpha-D-ribose 1-diphosphate + ATP. It participates in amino-acid biosynthesis; L-histidine biosynthesis; L-histidine from 5-phospho-alpha-D-ribose 1-diphosphate: step 1/9. Feedback inhibited by histidine. Its function is as follows. Catalyzes the condensation of ATP and 5-phosphoribose 1-diphosphate to form N'-(5'-phosphoribosyl)-ATP (PR-ATP). Has a crucial role in the pathway because the rate of histidine biosynthesis seems to be controlled primarily by regulation of HisG enzymatic activity. This is ATP phosphoribosyltransferase from Bacteroides thetaiotaomicron (strain ATCC 29148 / DSM 2079 / JCM 5827 / CCUG 10774 / NCTC 10582 / VPI-5482 / E50).